Consider the following 400-residue polypeptide: Exodeoxyribonuclease 7 large subunit (400 aa).

The protein belongs to the XseA family. Heterooligomer composed of large and small subunits.

The protein resides in the cytoplasm. It carries out the reaction Exonucleolytic cleavage in either 5'- to 3'- or 3'- to 5'-direction to yield nucleoside 5'-phosphates.. In terms of biological role, bidirectionally degrades single-stranded DNA into large acid-insoluble oligonucleotides, which are then degraded further into small acid-soluble oligonucleotides. This chain is Exodeoxyribonuclease 7 large subunit, found in Clostridium novyi (strain NT).